The sequence spans 201 residues: Ras-related protein Rab-1B (201 aa).

Met1 carries the post-translational modification N-acetylmethionine. Residues Ser17, Gly18, Val19, Gly20, Lys21, Ser22, Cys23, Tyr33, Thr34, Glu35, Ser36, Ser39, and Thr40 each contribute to the GTP site. Ser22 provides a ligand contact to Mg(2+). Residues Asp30–Phe45 carry the Switch 1 motif. Mg(2+) is bound by residues Thr40 and Asp63. The tract at residues Thr64–Gly83 is switch 2 region; Required for interaction with REP1/CHM. A Switch 2 motif is present at residues Ala65–Gly80. Positions 66, 121, 122, 124, 151, 152, and 153 each coordinate GTP. The tract at residues Met173–Cys201 is disordered. 2 S-geranylgeranyl cysteine lipidation sites follow: Cys200 and Cys201. A Cysteine methyl ester modification is found at Cys201.

The protein belongs to the small GTPase superfamily. Rab family. As to quaternary structure, interacts with MICAL1 and MICAL2. Interacts (in GTP-bound form) with MICALCL, MICAL1 and MILCAL3. Interacts with GDI1; the interaction requires the GDP-bound state. Interacts with CHM/REP1; the interaction requires the GDP-bound form and is necessary for prenylation by GGTase II. Interacts with RabGAP TBC1D20. Interacts (in GDP-bound form) with lipid phosphatase MTMR6 (via GRAM domain); the interaction regulates MTMR6 recruitment to the endoplasmic reticulum-Golgi intermediate compartment. Interacts (in GDP-bound form) with lipid phosphatase MTMR7. The cofactor is Mg(2+). Post-translationally, prenylated; by GGTase II, only after interaction of the substrate with Rab escort protein 1 (REP1).

It localises to the cytoplasm. Its subcellular location is the membrane. The protein localises to the preautophagosomal structure membrane. The protein resides in the perinuclear region. The enzyme catalyses GTP + H2O = GDP + phosphate + H(+). Regulated by guanine nucleotide exchange factors (GEFs) which promote the exchange of bound GDP for free GTP. Regulated by GTPase activating proteins (GAPs) including TBC1D20 which increases the GTP hydrolysis activity. Inhibited by GDP dissociation inhibitors (GDIs). In terms of biological role, the small GTPases Rab are key regulators of intracellular membrane trafficking, from the formation of transport vesicles to their fusion with membranes. Rabs cycle between an inactive GDP-bound form and an active GTP-bound form that is able to recruit to membranes different set of downstream effectors directly responsible for vesicle formation, movement, tethering and fusion. Plays a role in the initial events of the autophagic vacuole development which take place at specialized regions of the endoplasmic reticulum. Regulates vesicular transport between the endoplasmic reticulum and successive Golgi compartments. Required to modulate the compacted morphology of the Golgi. Promotes the recruitment of lipid phosphatase MTMR6 to the endoplasmic reticulum-Golgi intermediate compartment. This Bos taurus (Bovine) protein is Ras-related protein Rab-1B (RAB1B).